A 1828-amino-acid polypeptide reads, in one-letter code: Chromodomain-helicase-DNA-binding protein 2 (1828 aa).

Positions 1-14 are enriched in basic and acidic residues; the sequence is MMRNKDKSQEEDSS. The interval 1-243 is disordered; the sequence is MMRNKDKSQE…EDDDFETDSD (243 aa). Residues 15 to 75 show a composition bias toward low complexity; sequence LHSNASSHSA…SESESAGSKS (61 aa). Basic and acidic residues-rich tracts occupy residues 81 to 101, 115 to 128, and 146 to 155; these read EAKE…KMWE, SRQE…KEEA, and KKQEKWKQEP. Over residues 175 to 204 the composition is skewed to basic residues; the sequence is VKARRPVPRRTVPKPRVKKQPKTQRGKRKK. Phosphoserine occurs at positions 207 and 208. The segment covering 234-243 has biased composition (acidic residues); it reads EDDDFETDSD. Phosphothreonine is present on T240. S242 carries the post-translational modification Phosphoserine. 2 consecutive Chromo domains span residues 261-353 and 378-456; these read ETIE…QWLG and QIVE…IPTR. The 171-residue stretch at 496–666 folds into the Helicase ATP-binding domain; sequence AHSWCKNNSV…WSLLHFIMPE (171 aa). Residue 509–516 coordinates ATP; that stretch reads DEMGLGKT. Residues 617–620 carry the DEAH box motif; that stretch reads DEAH. The 152-residue stretch at 795–946 folds into the Helicase C-terminal domain; it reads LLDKLLTRLR…HLVIQRMDTT (152 aa). Disordered regions lie at residues 1030-1124, 1331-1462, 1556-1638, and 1680-1828; these read EDEE…RSVR, VTGG…DEDD, HKKR…ADRG, and HMDA…VRKT. Positions 1037 to 1065 are enriched in basic and acidic residues; that stretch reads ERPHKDWDEIIPEEQRKKVEEEERQKELE. A phosphoserine mark is found at S1085, S1087, S1365, and S1386. The segment covering 1347 to 1371 has biased composition (basic and acidic residues); the sequence is KKENKVPRLKEEHGIELSSPRHSDN. 2 stretches are compositionally biased toward basic and acidic residues: residues 1396 to 1431 and 1565 to 1574; these read ENKE…KSGD and EQKKKDDVTG. A CHD1 helical C-terminal domain (CHCT) region spans residues 1464–1566; the sequence is LDQETFSICK…KKRSQEEEEQ (103 aa). The segment covering 1584–1601 has biased composition (polar residues); sequence SGSSRDSLISQSHTSHNL. Composition is skewed to basic and acidic residues over residues 1698–1720, 1739–1749, 1760–1772, and 1795–1814; these read RPYD…DRHH, QDFRRMSDHRP, DHYR…KLGE, and SPHD…RSLE. S1807 carries the post-translational modification Phosphoserine.

It belongs to the SNF2/RAD54 helicase family. In terms of assembly, interacts with MYOD1. Interacts with histone H3.3.

The protein resides in the nucleus. The enzyme catalyses ATP + H2O = ADP + phosphate + H(+). ATP-dependent chromatin-remodeling factor that specifically binds to the promoter of target genes, leading to chromatin remodeling, possibly by promoting deposition of histone H3.3. Involved in myogenesis via interaction with MYOD1: binds to myogenic gene regulatory sequences and mediates incorporation of histone H3.3 prior to the onset of myogenic gene expression, promoting their expression. The chain is Chromodomain-helicase-DNA-binding protein 2 (CHD2) from Homo sapiens (Human).